The following is a 236-amino-acid chain: uncharacterized protein (236 aa).

The next 7 membrane-spanning stretches (helical) occupy residues methionine 32 to isoleucine 52, phenylalanine 61 to glycine 81, isoleucine 90 to tyrosine 110, isoleucine 115 to serine 135, glycine 144 to leucine 164, serine 167 to tryptophan 187, and leucine 208 to methionine 228.

It belongs to the BI1 family.

The protein localises to the cell membrane. This is an uncharacterized protein from Rickettsia prowazekii (strain Madrid E).